The sequence spans 137 residues: Small ribosomal subunit protein uS12 (137 aa).

A disordered region spans residues 1 to 57; that stretch reads MPTINQLVRKPRKSKVEKSKSPALNVGYNSLKRVPTNESAPQKRGVATRVGTMTPKK. Asp-102 carries the post-translational modification 3-methylthioaspartic acid.

The protein belongs to the universal ribosomal protein uS12 family. In terms of assembly, part of the 30S ribosomal subunit. Contacts proteins S8 and S17. May interact with IF1 in the 30S initiation complex.

In terms of biological role, with S4 and S5 plays an important role in translational accuracy. Functionally, interacts with and stabilizes bases of the 16S rRNA that are involved in tRNA selection in the A site and with the mRNA backbone. Located at the interface of the 30S and 50S subunits, it traverses the body of the 30S subunit contacting proteins on the other side and probably holding the rRNA structure together. The combined cluster of proteins S8, S12 and S17 appears to hold together the shoulder and platform of the 30S subunit. The polypeptide is Small ribosomal subunit protein uS12 (Streptococcus gordonii (strain Challis / ATCC 35105 / BCRC 15272 / CH1 / DL1 / V288)).